The primary structure comprises 588 residues: Aspartate--tRNA ligase (588 aa).

E177 is an L-aspartate binding site. The segment at 201-204 (QLFK) is aspartate. R223 contributes to the L-aspartate binding site. ATP-binding positions include 223–225 (RDE) and Q232. L-aspartate is bound at residue H451. ATP is bound at residue E485. Position 492 (R492) interacts with L-aspartate. ATP is bound at residue 537–540 (GLDR).

This sequence belongs to the class-II aminoacyl-tRNA synthetase family. Type 1 subfamily. In terms of assembly, homodimer.

It is found in the cytoplasm. The enzyme catalyses tRNA(Asp) + L-aspartate + ATP = L-aspartyl-tRNA(Asp) + AMP + diphosphate. Its function is as follows. Catalyzes the attachment of L-aspartate to tRNA(Asp) in a two-step reaction: L-aspartate is first activated by ATP to form Asp-AMP and then transferred to the acceptor end of tRNA(Asp). The chain is Aspartate--tRNA ligase from Staphylococcus aureus (strain NCTC 8325 / PS 47).